Here is a 297-residue protein sequence, read N- to C-terminus: tRNA dimethylallyltransferase (297 aa).

15–22 serves as a coordination point for ATP; the sequence is GPTASGKS. Residue 17 to 22 participates in substrate binding; that stretch reads TASGKS. Interaction with substrate tRNA regions lie at residues 40 to 43 and 164 to 168; these read DSMQ and QRIVR.

Belongs to the IPP transferase family. As to quaternary structure, monomer. It depends on Mg(2+) as a cofactor.

It carries out the reaction adenosine(37) in tRNA + dimethylallyl diphosphate = N(6)-dimethylallyladenosine(37) in tRNA + diphosphate. Catalyzes the transfer of a dimethylallyl group onto the adenine at position 37 in tRNAs that read codons beginning with uridine, leading to the formation of N6-(dimethylallyl)adenosine (i(6)A). This is tRNA dimethylallyltransferase from Rhizobium etli (strain ATCC 51251 / DSM 11541 / JCM 21823 / NBRC 15573 / CFN 42).